The following is a 137-amino-acid chain: Small ribosomal subunit protein uS12 (137 aa).

Positions 1-24 are disordered; that stretch reads MPTINQLVRKGRRSQSSKSKAPAL. Position 102 is a 3-methylthioaspartic acid (D102).

It belongs to the universal ribosomal protein uS12 family. In terms of assembly, part of the 30S ribosomal subunit. Contacts proteins S8 and S17. May interact with IF1 in the 30S initiation complex.

With S4 and S5 plays an important role in translational accuracy. Its function is as follows. Interacts with and stabilizes bases of the 16S rRNA that are involved in tRNA selection in the A site and with the mRNA backbone. Located at the interface of the 30S and 50S subunits, it traverses the body of the 30S subunit contacting proteins on the other side and probably holding the rRNA structure together. The combined cluster of proteins S8, S12 and S17 appears to hold together the shoulder and platform of the 30S subunit. This Pediococcus pentosaceus (strain ATCC 25745 / CCUG 21536 / LMG 10740 / 183-1w) protein is Small ribosomal subunit protein uS12.